A 123-amino-acid polypeptide reads, in one-letter code: Large ribosomal subunit protein uL29 (123 aa).

This sequence belongs to the universal ribosomal protein uL29 family.

The protein is Large ribosomal subunit protein uL29 (RPL35) of Theileria parva (East coast fever infection agent).